The chain runs to 406 residues: Tryptophan synthase beta chain (406 aa).

An N6-(pyridoxal phosphate)lysine modification is found at K99.

Belongs to the TrpB family. Tetramer of two alpha and two beta chains. Requires pyridoxal 5'-phosphate as cofactor.

The catalysed reaction is (1S,2R)-1-C-(indol-3-yl)glycerol 3-phosphate + L-serine = D-glyceraldehyde 3-phosphate + L-tryptophan + H2O. It functions in the pathway amino-acid biosynthesis; L-tryptophan biosynthesis; L-tryptophan from chorismate: step 5/5. In terms of biological role, the beta subunit is responsible for the synthesis of L-tryptophan from indole and L-serine. This Rhizobium etli (strain CIAT 652) protein is Tryptophan synthase beta chain.